The following is a 713-amino-acid chain: NAD(+) hydrolase SARM1 (713 aa).

The stretch at aspartate 53–glutamate 96 is one ARM 1 repeat. Residues tryptophan 99, arginine 106, glutamate 145–arginine 153, and histidine 186–lysine 189 each bind NAD(+). 7 ARM repeats span residues glutamate 110–valine 149, glutamate 151–lysine 189, glutamate 192–methionine 231, glycine 233–asparagine 276, arginine 277–aspartate 310, serine 311–serine 350, and glutamine 355–proline 398. SAM domains are found at residues tryptophan 408–tyrosine 472 and cysteine 478–alanine 537. One can recognise a TIR domain in the interval lysine 552–proline 695. NAD(+) contacts are provided by residues arginine 561–arginine 562 and glutamate 591. The active site involves glutamate 634.

The protein belongs to the SARM1 family. As to quaternary structure, homooctamer; forms an octameric ring via SAM domains.

The protein resides in the cytoplasm. It is found in the cell projection. Its subcellular location is the axon. The protein localises to the dendrite. It localises to the synapse. The protein resides in the mitochondrion. It catalyses the reaction NAD(+) + H2O = ADP-D-ribose + nicotinamide + H(+). The enzyme catalyses NAD(+) = cyclic ADP-beta-D-ribose + nicotinamide + H(+). The catalysed reaction is NADP(+) + H2O = ADP-D-ribose 2'-phosphate + nicotinamide + H(+). With respect to regulation, autoinhibited: in the inactive state, the enzymatic TIR domain is held apart by the autoinhibiting ARM repeats. NAD(+)-binding to ARM repeats maintains an inactive state by promoting interaction between ARM repeats and the TIR domain, thereby facilitating inhibition of the enzymatic TIR domain. Following activation, possibly by nicotinamide mononucleotide (NMN), auto-inhibitory interactions are released, allowing self-association of the TIR domains and subsequent activation of the NAD(+) hydrolase (NADase) activity. Self-association of TIR domains is facilitated by the octamer of SAM domains. NAD(+) hydrolase, which plays a key role in axonal degeneration following injury by regulating NAD(+) metabolism. Acts as a negative regulator of MYD88- and TRIF-dependent toll-like receptor signaling pathway by promoting Wallerian degeneration, an injury-induced form of programmed subcellular death which involves degeneration of an axon distal to the injury site. Wallerian degeneration is triggerred by NAD(+) depletion: in response to injury, SARM1 is activated and catalyzes cleavage of NAD(+) into ADP-D-ribose (ADPR), cyclic ADPR (cADPR) and nicotinamide; NAD(+) cleavage promoting cytoskeletal degradation and axon destruction. Also able to hydrolyze NADP(+), but not other NAD(+)-related molecules. Can activate neuronal cell death in response to stress. The chain is NAD(+) hydrolase SARM1 from Danio rerio (Zebrafish).